A 252-amino-acid polypeptide reads, in one-letter code: MAGHSKWANIKRQKAVVDAKKGKTFTQLSRAIILAARSGIPDPSGNFQLRTAIDKAKAAGIPNDNIERAIAKGAGTFGGDNASLEEIRYEGYGPGGVAILIEALTDNRNRTAADLRVAFSKNGGNLGETGCVSWMFDQKGVCVVSGVVDEDQLLEASLEGGAESYEMTEDETAEVFTEVANLEILNQTLKDQGFKVTDAELRWIPSNNVEVTEPDQARSLLKLIDTLEGLDDVQNVTSNFEMSENLMAVSFA.

Belongs to the TACO1 family.

Its subcellular location is the cytoplasm. The chain is Probable transcriptional regulatory protein Ava_1228 from Trichormus variabilis (strain ATCC 29413 / PCC 7937) (Anabaena variabilis).